Here is a 298-residue protein sequence, read N- to C-terminus: GTP cyclohydrolase FolE2 (298 aa).

The protein belongs to the GTP cyclohydrolase IV family.

It catalyses the reaction GTP + H2O = 7,8-dihydroneopterin 3'-triphosphate + formate + H(+). The protein operates within cofactor biosynthesis; 7,8-dihydroneopterin triphosphate biosynthesis; 7,8-dihydroneopterin triphosphate from GTP: step 1/1. Its function is as follows. Converts GTP to 7,8-dihydroneopterin triphosphate. The sequence is that of GTP cyclohydrolase FolE2 from Pseudomonas aeruginosa (strain UCBPP-PA14).